The following is a 126-amino-acid chain: Fluoride-specific ion channel FluC (126 aa).

4 consecutive transmembrane segments (helical) span residues 3-23, 37-57, 68-88, and 101-121; these read PYLL…RFLI, VGTL…ALYF, LVIT…LETV, and TNIT…MMLF. Na(+) is bound by residues Gly-75 and Thr-78.

This sequence belongs to the fluoride channel Fluc/FEX (TC 1.A.43) family.

Its subcellular location is the cell inner membrane. It carries out the reaction fluoride(in) = fluoride(out). Na(+) is not transported, but it plays an essential structural role and its presence is essential for fluoride channel function. In terms of biological role, fluoride-specific ion channel. Important for reducing fluoride concentration in the cell, thus reducing its toxicity. The chain is Fluoride-specific ion channel FluC from Sulfurovum sp. (strain NBC37-1).